The primary structure comprises 357 residues: tRNA pseudouridine synthase B (357 aa).

Residue Asp42 is the Nucleophile of the active site.

This sequence belongs to the pseudouridine synthase TruB family. Type 1 subfamily.

The catalysed reaction is uridine(55) in tRNA = pseudouridine(55) in tRNA. Functionally, responsible for synthesis of pseudouridine from uracil-55 in the psi GC loop of transfer RNAs. The chain is tRNA pseudouridine synthase B from Treponema denticola (strain ATCC 35405 / DSM 14222 / CIP 103919 / JCM 8153 / KCTC 15104).